Consider the following 313-residue polypeptide: Non-functional target of rapamycin complex subunit LST8-2 (313 aa).

7 WD repeats span residues 1–35 (MFEN…CYFS), 38–76 (YPDL…PHIP), 82–121 (SHTK…CQRE), 123–162 (RSVS…CSCE), 166–205 (EVGT…QTMT), 215–255 (AHNS…LEKV), and 258–297 (GHER…EEMV).

This sequence belongs to the WD repeat LST8 family.

In terms of biological role, probable non-functional protein. This is Non-functional target of rapamycin complex subunit LST8-2 from Arabidopsis thaliana (Mouse-ear cress).